A 152-amino-acid polypeptide reads, in one-letter code: Putative pre-16S rRNA nuclease (152 aa).

Belongs to the YqgF nuclease family.

The protein resides in the cytoplasm. Its function is as follows. Could be a nuclease involved in processing of the 5'-end of pre-16S rRNA. The protein is Putative pre-16S rRNA nuclease of Synechocystis sp. (strain ATCC 27184 / PCC 6803 / Kazusa).